The chain runs to 1230 residues: Serine/threonine-protein kinase PDK1 (1230 aa).

The disordered stretch occupies residues 1–277 (MASSHFGPAS…ASSGALKKHS (277 aa)). Over residues 34–50 (SSSSSSRSTTTCSSTSS) the composition is skewed to low complexity. Positions 62-76 (ETSTAATSRSQLPSN) are enriched in polar residues. Residues 77-87 (RHSENEAEHDT) show a composition bias toward basic and acidic residues. 2 stretches are compositionally biased toward polar residues: residues 107–117 (PRSNRLGTSPQ) and 140–175 (SKRQ…SSTI). The span at 185 to 202 (PNDRLSHDRESHSAERPR) shows a compositional bias: basic and acidic residues. Residues 217–226 (STPSSPTNSY) show a composition bias toward polar residues. Basic and acidic residues predominate over residues 252–262 (ARDGDDRERRQ). The 521-residue stretch at 281–801 (WVLGEELGVG…ITFIKTHPFF (521 aa)) folds into the Protein kinase domain. ATP-binding positions include 291 to 293 (SYS) and Lys-319. Disordered stretches follow at residues 345-522 (LSDP…RSGA) and 534-597 (TLPP…KMSA). 2 stretches are compositionally biased toward polar residues: residues 378–397 (TASI…TVSN) and 408–433 (IVTT…SPTA). Basic and acidic residues-rich tracts occupy residues 466-494 (GGED…DNMT) and 502-521 (VREE…ERSG). Residues 535–544 (LPPPQIPSTP) are compositionally biased toward pro residues. Residues 555-569 (DGHRTSRETPRDRPH) show a composition bias toward basic and acidic residues. ATP-binding positions include 621–623 (SLA) and Glu-627. Asp-666 serves as the catalytic Proton acceptor. Residues Glu-670 and Asp-684 each coordinate ATP. The span at 850 to 859 (EDEDGFEYDA) shows a compositional bias: acidic residues. Disordered regions lie at residues 850–871 (EDED…GGAV), 907–955 (LGED…GGNR), 972–1035 (GGGM…SDEA), and 1116–1152 (EADG…GGGH). Residues 927 to 942 (GKREKEVEKKKGEKAR) show a composition bias toward basic and acidic residues. 3 stretches are compositionally biased toward low complexity: residues 977–992 (GSAT…RTPG), 1002–1030 (RPGS…GASM), and 1120–1137 (DPAG…SHVE). Residues 1138-1152 (SGGGGVGGGGRGGGH) show a composition bias toward gly residues.

Belongs to the protein kinase superfamily. AGC Ser/Thr protein kinase family. PDPK1 subfamily.

The catalysed reaction is L-seryl-[protein] + ATP = O-phospho-L-seryl-[protein] + ADP + H(+). It catalyses the reaction L-threonyl-[protein] + ATP = O-phospho-L-threonyl-[protein] + ADP + H(+). In terms of biological role, serine/threonine-protein kinase that functions in the sphingolipid-mediated signaling pathway, regulating organization of the plasma membrane. May phosphorylate PKC1 to activate the cell integrity MAPK cascade during cell wall and membrane stress. May regulate sphingolipid metabolism upstream of YPK1. The protein is Serine/threonine-protein kinase PDK1 of Cryptococcus neoformans var. grubii serotype A (strain H99 / ATCC 208821 / CBS 10515 / FGSC 9487) (Filobasidiella neoformans var. grubii).